The sequence spans 569 residues: Laccase-14 (569 aa).

The first 33 residues, 1-33 (MEFKLNIPNTIIKTLQTIVFFLFVLLAFQIAEA), serve as a signal peptide directing secretion. 2 consecutive Plastocyanin-like domains span residues 41–157 (KIKS…PKRG) and 167–320 (REIP…YKGD). A glycan (N-linked (GlcNAc...) asparagine) is linked at asparagine 87. Cu cation is bound by residues histidine 91, histidine 93, histidine 136, and histidine 138. N-linked (GlcNAc...) asparagine glycans are attached at residues asparagine 190, asparagine 249, asparagine 336, asparagine 374, asparagine 395, asparagine 430, and asparagine 452. A Plastocyanin-like 3 domain is found at 420 to 553 (DFPRNPPTKF…NTVFIVKDGP (134 aa)). Residues histidine 470, histidine 473, histidine 475, histidine 532, cysteine 533, histidine 534, histidine 538, and methionine 543 each contribute to the Cu cation site.

The protein belongs to the multicopper oxidase family. Cu cation is required as a cofactor. Expressed at low levels in flowers and siliques.

Its subcellular location is the secreted. The protein localises to the extracellular space. It is found in the apoplast. It catalyses the reaction 4 hydroquinone + O2 = 4 benzosemiquinone + 2 H2O. Functionally, lignin degradation and detoxification of lignin-derived products. The sequence is that of Laccase-14 (LAC14) from Arabidopsis thaliana (Mouse-ear cress).